A 67-amino-acid polypeptide reads, in one-letter code: uncharacterized protein (67 aa).

This is an uncharacterized protein from Acidianus filamentous virus 2 (isolate Italy/Pozzuoli) (AFV-2).